Here is a 158-residue protein sequence, read N- to C-terminus: MQPSSGRRFTFQTSVYEEACGRLVLTSFIAERRRPGTIIKTSLEREFYRMGSLPEFPLENPFENRNRFYVVDDESELRANDWIRLYLELSVAISDRTTTDHDLSGLRIVSVAIQTMEPPSESSLTAKNATVYIRYIDFCKARCGQNLDRIAVVRRNLQ.

It belongs to the UPF0725 (EMB2204) family.

This Arabidopsis thaliana (Mouse-ear cress) protein is UPF0725 protein At3g57210.